The primary structure comprises 790 residues: Phenylalanine--tRNA ligase beta subunit (790 aa).

The tRNA-binding domain occupies 39 to 147 (AKPFSGIVVG…ADAPVGVDVR (109 aa)). A B5 domain is found at 400 to 476 (PAKALVNLRH…RLYGYNKLPV (77 aa)). Residues Asp-454, Asp-460, Glu-463, and Glu-464 each coordinate Mg(2+). The region spanning 696–789 (SRFPEIRRDL…LGNRFGASLR (94 aa)) is the FDX-ACB domain.

This sequence belongs to the phenylalanyl-tRNA synthetase beta subunit family. Type 1 subfamily. Tetramer of two alpha and two beta subunits. It depends on Mg(2+) as a cofactor.

The protein localises to the cytoplasm. The catalysed reaction is tRNA(Phe) + L-phenylalanine + ATP = L-phenylalanyl-tRNA(Phe) + AMP + diphosphate + H(+). The protein is Phenylalanine--tRNA ligase beta subunit of Hahella chejuensis (strain KCTC 2396).